The chain runs to 271 residues: Cobalt import ATP-binding protein CbiO (271 aa).

The ABC transporter domain maps to 2-236 (LATSDLWFRY…TEAMEHAGLT (235 aa)). Position 34-41 (34-41 (GANGCGKS)) interacts with ATP.

Belongs to the ABC transporter superfamily. Cobalt importer (TC 3.A.1.18.1) family. As to quaternary structure, forms an energy-coupling factor (ECF) transporter complex composed of an ATP-binding protein (A component, CbiO), a transmembrane protein (T component, CbiQ) and 2 possible substrate-capture proteins (S components, CbiM and CbiN) of unknown stoichimetry.

It localises to the cell inner membrane. Its pathway is cofactor biosynthesis; adenosylcobalamin biosynthesis. In terms of biological role, part of the energy-coupling factor (ECF) transporter complex CbiMNOQ involved in cobalt import. Presumably responsible for energy coupling to the transport system. The sequence is that of Cobalt import ATP-binding protein CbiO from Salmonella paratyphi A (strain ATCC 9150 / SARB42).